A 527-amino-acid chain; its full sequence is MNTYNYLIDELHILDDEIISYGKDKFKIELSLQERLKDKAPGKLILVTSINPTSSGEGKTTLSIGLAQGFKKNGKDVMLALREPSMGPVFGMKGGATGGGVSILEPSLDIDLHFNGDIHALTSANNLLSAIIDNHMYFGNELNIKDVYWQRALDVNDRSLREVKTKARDDKFTITAASEMMAILALARDFKDLKERLNNILIGTDKDGKDLFVSDLKCADSLALLLKDAIKPNLVFAKEMVPALVHAGPFANIAHGCNSVIATNTALKLADYVITEAGFGADLGMEKFLHIKQPHLYTKASVVVVVATIKALKLHGGVTESNLDEPNIEALSKGLENIEKHLENIKLFGLNSVVALNKFDTDSEEELQFLKNWARINHLNYGISEGYSKGGEGTKDLAKLVEKVAYEPSKFKRIYSNEENHEYKIRKIAENIYGAKDVIFSQQAKKKLNQYKHLEIPICIAKTPLSLSGDPKLKGRPRDFVLEISDIKVSLGANLLVVLTKGINTMPGLNNRPRALDFKLDDKGELI.

53–60 (TSSGEGKT) is a binding site for ATP.

The protein belongs to the formate--tetrahydrofolate ligase family.

The enzyme catalyses (6S)-5,6,7,8-tetrahydrofolate + formate + ATP = (6R)-10-formyltetrahydrofolate + ADP + phosphate. Its pathway is one-carbon metabolism; tetrahydrofolate interconversion. The polypeptide is Formate--tetrahydrofolate ligase (Acholeplasma laidlawii (strain PG-8A)).